Consider the following 371-residue polypeptide: tRNA-specific 2-thiouridylase MnmA (371 aa).

Residues 13-20 and M39 each bind ATP; that span reads GMSGGVDS. The segment at 99 to 101 is interaction with target base in tRNA; that stretch reads NPD. C104 acts as the Nucleophile in catalysis. C104 and C200 are oxidised to a cystine. ATP is bound at residue G128. Residues 150 to 152 form an interaction with tRNA region; sequence KDQ. The active-site Cysteine persulfide intermediate is the C200. An interaction with tRNA region spans residues 308-309; that stretch reads RY.

It belongs to the MnmA/TRMU family.

The protein localises to the cytoplasm. It carries out the reaction S-sulfanyl-L-cysteinyl-[protein] + uridine(34) in tRNA + AH2 + ATP = 2-thiouridine(34) in tRNA + L-cysteinyl-[protein] + A + AMP + diphosphate + H(+). Catalyzes the 2-thiolation of uridine at the wobble position (U34) of tRNA, leading to the formation of s(2)U34. This Bacillus anthracis protein is tRNA-specific 2-thiouridylase MnmA.